We begin with the raw amino-acid sequence, 382 residues long: MKNAVHFGAGNIGRGFIGKLLADAEVEVTFADVDAPLVDQLSHKQEYKVKVVGTECQIDTVTHVTAVNSASEDVIDRIVKTDLVTTAVGPNVLDIIAKTIATGIAKRFAAGNDKPLNIIACENMVRGTTHLKGEVYKHLDESLHSKADELVGFVDSAVDRIVPPAEAANDDPLEVTVESFSEWIVDEQQFKGEIPDIAGMEKTNNLMAFVERKLFTLNTGHCITAYLGCLKGHRTIREAIEDPSIHAEVKQAMQESGEVLIKRYGFDRDMHNAYIEKILGRFANPYLVDEVDRVGRQPIRKLGANDRLVKPLLGTIEYGTENKTLLKGIAAALKYTNDTDPQAVEQQNSLKEVGVKKTLATYTGLAENSAEVTQIETLYNQL.

Residue 4–15 (AVHFGAGNIGRG) coordinates NAD(+).

Belongs to the mannitol dehydrogenase family.

It carries out the reaction D-mannitol 1-phosphate + NAD(+) = beta-D-fructose 6-phosphate + NADH + H(+). In Vibrio campbellii (strain ATCC BAA-1116), this protein is Mannitol-1-phosphate 5-dehydrogenase.